The sequence spans 1006 residues: Serine/threonine-protein phosphatase BSL3 (1006 aa).

The tract at residues Met-1 to Ala-67 is disordered. 2 stretches are compositionally biased toward low complexity: residues Ser-38–Pro-47 and Gln-54–Ala-67. 5 Kelch repeats span residues Thr-138 to Ala-184, Tyr-242 to Ala-290, Leu-295 to Asn-345, Ser-351 to Gly-398, and Leu-419 to Gly-465. Disordered regions lie at residues Ala-454–Pro-494 and Gly-552–Asp-579. Ser-616 carries the post-translational modification Phosphoserine. Mn(2+)-binding residues include Asp-709, His-711, Asp-743, and Asn-775. The active-site Proton donor is the His-776. Mn(2+)-binding residues include His-828 and His-907. Ser-964 carries the phosphoserine modification. The tract at residues Asn-982–Ile-1006 is disordered.

The protein belongs to the PPP phosphatase family. BSU subfamily. Mn(2+) serves as cofactor. As to expression, expressed throughout the plant, with a higher level in younger parts.

The protein localises to the nucleus. It catalyses the reaction O-phospho-L-seryl-[protein] + H2O = L-seryl-[protein] + phosphate. The enzyme catalyses O-phospho-L-threonyl-[protein] + H2O = L-threonyl-[protein] + phosphate. Functionally, phosphatase involved in elongation process, probably by acting as a regulator of brassinolide signaling. This Arabidopsis thaliana (Mouse-ear cress) protein is Serine/threonine-protein phosphatase BSL3 (BSL3).